An 860-amino-acid polypeptide reads, in one-letter code: SH2 domain-containing protein 3C (860 aa).

At S22 the chain carries Phosphoserine. 2 disordered regions span residues 51–117 (EATQ…PPGL) and 130–180 (PLED…PEAG). Positions 162 to 175 (ERPPRDVHSERAAG) are enriched in basic and acidic residues. Residues 220–319 (WYHGRIPREV…QSGAIIYCPV (100 aa)) form the SH2 domain. Residues Y278 and Y283 each carry the phosphotyrosine modification. A disordered region spans residues 335 to 537 (GQGSSKPASP…LSENGAPEGD (203 aa)). Phosphoserine is present on S359. Composition is skewed to low complexity over residues 405–420 (SPMS…PAYS), 427–443 (AAPA…SPVA), and 479–490 (SPSPSLSSYSDP). S440 is modified (phosphoserine). The region spanning 586–854 (DARTLARHVT…TALSHKLEPA (269 aa)) is the Ras-GEF domain. Position 793 is a phosphotyrosine (Y793).

Component of a complex comprised of SH2D3C, BCAR1/CAS, and CRK. Within the complex, interacts with CRK and (via C-terminus) with BCAR1/CAS (via C-terminus). Interacts with NEDD9/HEF1. Interacts with EPHB2. As to quaternary structure, interacts with NEDD9/HEF1. Interacts with BCAR1/CAS. Interacts with PTK2B. In terms of assembly, interacts (via C-terminus) with BCAR1/CAS (via C-terminus). Interacts with IGF1. Phosphorylated by MAPK/ERK upon T-cell receptor stimulation in T-cells. As to expression, ubiquitously expressed.

It is found in the cytoplasm. It localises to the cell membrane. The protein resides in the cell projection. The protein localises to the axon. Its subcellular location is the ruffle membrane. Acts as an adapter protein that mediates cell signaling pathways involved in cellular functions such as cell adhesion and migration, tissue organization, and the regulation of the immune response. Plays a role in integrin-mediated cell adhesion through BCAR1-CRK-RAPGEF1 signaling and activation of the small GTPase RAP1. Promotes cell migration and invasion through the extracellular matrix. Required for marginal zone B-cell development and thymus-independent type 2 immune responses. Mediates migration and adhesion of B cells in the splenic marginal zone via promoting hyperphosphorylation of NEDD9/CASL. Plays a role in CXCL13-induced chemotaxis of B-cells. Plays a role in the migration of olfactory sensory neurons (OSNs) into the forebrain and the innervation of the olfactory bulb by the OSN axons during development. Required for the efficient tyrosine phosphorylation of BCAR1 in OSN axons. In terms of biological role, important regulator of chemokine-induced, integrin-mediated T lymphocyte adhesion and migration, acting upstream of RAP1. Required for tissue-specific adhesion of T lymphocytes to peripheral tissues. Required for basal and CXCL2 stimulated serine-threonine phosphorylation of NEDD9. May be involved in the regulation of T-cell receptor-mediated IL2 production through the activation of the JNK pathway in T-cells. Its function is as follows. May be involved in the BCAR1/CAS-mediated JNK activation pathway. The sequence is that of SH2 domain-containing protein 3C (SH2D3C) from Homo sapiens (Human).